The primary structure comprises 454 residues: Bifunctional protein GlmU (454 aa).

Residues 1-226 (MSLNVVILAA…AIEVEGANNR (226 aa)) are pyrophosphorylase. Residues 8 to 11 (LAAG), Lys-22, Gln-73, 78 to 79 (GT), 100 to 102 (YGD), Gly-137, Glu-151, Asn-166, and Asn-224 contribute to the UDP-N-acetyl-alpha-D-glucosamine site. Residue Asp-102 participates in Mg(2+) binding. Asn-224 lines the Mg(2+) pocket. Residues 227-247 (VQLAQLERAYQARAAEKMMLE) are linker. An N-acetyltransferase region spans residues 248–454 (GANLRDPARI…GWQRPIKIKK (207 aa)). UDP-N-acetyl-alpha-D-glucosamine is bound by residues Arg-330 and Lys-348. The Proton acceptor role is filled by His-360. Tyr-363 and Asn-374 together coordinate UDP-N-acetyl-alpha-D-glucosamine. Acetyl-CoA is bound by residues Ala-377, 383 to 384 (NY), Ser-402, Ala-420, and Arg-437.

This sequence in the N-terminal section; belongs to the N-acetylglucosamine-1-phosphate uridyltransferase family. The protein in the C-terminal section; belongs to the transferase hexapeptide repeat family. As to quaternary structure, homotrimer. Mg(2+) is required as a cofactor.

The protein localises to the cytoplasm. The catalysed reaction is alpha-D-glucosamine 1-phosphate + acetyl-CoA = N-acetyl-alpha-D-glucosamine 1-phosphate + CoA + H(+). The enzyme catalyses N-acetyl-alpha-D-glucosamine 1-phosphate + UTP + H(+) = UDP-N-acetyl-alpha-D-glucosamine + diphosphate. It participates in nucleotide-sugar biosynthesis; UDP-N-acetyl-alpha-D-glucosamine biosynthesis; N-acetyl-alpha-D-glucosamine 1-phosphate from alpha-D-glucosamine 6-phosphate (route II): step 2/2. It functions in the pathway nucleotide-sugar biosynthesis; UDP-N-acetyl-alpha-D-glucosamine biosynthesis; UDP-N-acetyl-alpha-D-glucosamine from N-acetyl-alpha-D-glucosamine 1-phosphate: step 1/1. The protein operates within bacterial outer membrane biogenesis; LPS lipid A biosynthesis. In terms of biological role, catalyzes the last two sequential reactions in the de novo biosynthetic pathway for UDP-N-acetylglucosamine (UDP-GlcNAc). The C-terminal domain catalyzes the transfer of acetyl group from acetyl coenzyme A to glucosamine-1-phosphate (GlcN-1-P) to produce N-acetylglucosamine-1-phosphate (GlcNAc-1-P), which is converted into UDP-GlcNAc by the transfer of uridine 5-monophosphate (from uridine 5-triphosphate), a reaction catalyzed by the N-terminal domain. The polypeptide is Bifunctional protein GlmU (Shewanella frigidimarina (strain NCIMB 400)).